Here is a 479-residue protein sequence, read N- to C-terminus: MTDARKALPLDLSLENKVKDLSQADFGYKEMQLSEREMPGLMELIAKHGAEKPLKGLKVTGSLHMTIQTAMLIKTLYELGADIRWASCNIFSTQDHAAAAIADSGMAKVFAWKGETLEEYWWCTEMALTWPDGSGPDLIVDDGGDATMLIHKGVEAEKNPALLEKSYDNKEFQIVMNRIALSMKNDPGKWTRVAAKVRGVSEETTTGVHRLYHMEKDGSLLFPAINVNDSVTKSKFDNLYGCRESLADGIKRATDVMIAGKTVVVLGYGDVGKGCAHSMRGFGARVLVTEIDPICALQAAMEGFEVVTMDEAAPEGDIFVTATGNFKVITGEHMERMKDEAIVCNIGHFDNEIDMAYLEDSTECSCLNIKPQVDKWTLKSGRSIIVLAEGRLVNLGCATGHPSFVMSNSFTNQVLAQLELASNPDLERKVYILPKKLDEEVARLHLARLGAKLTTLTDEQAEYIGVDKTGPFKPDHYRY.

Positions 66, 142, and 203 each coordinate substrate. Residue 204-206 participates in NAD(+) binding; the sequence is TTT. Substrate-binding residues include K233 and D237. NAD(+)-binding positions include N238, 267-272, E290, N325, 346-348, and N394; these read GYGDVG and IGH.

It belongs to the adenosylhomocysteinase family. Requires NAD(+) as cofactor.

Its subcellular location is the cytoplasm. The enzyme catalyses S-adenosyl-L-homocysteine + H2O = L-homocysteine + adenosine. It participates in amino-acid biosynthesis; L-homocysteine biosynthesis; L-homocysteine from S-adenosyl-L-homocysteine: step 1/1. Its function is as follows. May play a key role in the regulation of the intracellular concentration of adenosylhomocysteine. The chain is Adenosylhomocysteinase from Oleidesulfovibrio alaskensis (strain ATCC BAA-1058 / DSM 17464 / G20) (Desulfovibrio alaskensis).